Consider the following 968-residue polypeptide: Translation initiation factor IF-2 (968 aa).

The span at 305–319 shows a compositional bias: low complexity; that stretch reads KPAAAAGAPGAPGAA. Residues 305 to 376 are disordered; it reads KPAAAAGAPG…NDRDARPEST (72 aa). Residues 468–635 enclose the tr-type G domain; it reads PRAPVVTVMG…QVLLQAEVLE (168 aa). Positions 477 to 484 are G1; sequence GHVDHGKT. A GTP-binding site is contributed by 477–484; sequence GHVDHGKT. A G2 region spans residues 502-506; it reads GITQH. The interval 523-526 is G3; it reads DTPG. GTP-binding positions include 523-527 and 577-580; these read DTPGH and NKID. Residues 577 to 580 are G4; sequence NKID. The interval 613 to 615 is G5; that stretch reads SAR.

This sequence belongs to the TRAFAC class translation factor GTPase superfamily. Classic translation factor GTPase family. IF-2 subfamily.

It localises to the cytoplasm. In terms of biological role, one of the essential components for the initiation of protein synthesis. Protects formylmethionyl-tRNA from spontaneous hydrolysis and promotes its binding to the 30S ribosomal subunits. Also involved in the hydrolysis of GTP during the formation of the 70S ribosomal complex. The chain is Translation initiation factor IF-2 from Polaromonas sp. (strain JS666 / ATCC BAA-500).